The primary structure comprises 145 residues: 3-dehydroquinate dehydratase (145 aa).

The Proton acceptor role is filled by Tyr24. Residues Asn75, His81, and Asp88 each contribute to the substrate site. His102 acts as the Proton donor in catalysis. Residues 103 to 104 (LS) and Arg113 contribute to the substrate site.

Belongs to the type-II 3-dehydroquinase family. Homododecamer.

The catalysed reaction is 3-dehydroquinate = 3-dehydroshikimate + H2O. It functions in the pathway metabolic intermediate biosynthesis; chorismate biosynthesis; chorismate from D-erythrose 4-phosphate and phosphoenolpyruvate: step 3/7. Catalyzes a trans-dehydration via an enolate intermediate. The polypeptide is 3-dehydroquinate dehydratase (Chelativorans sp. (strain BNC1)).